An 852-amino-acid polypeptide reads, in one-letter code: G-type lectin S-receptor-like serine/threonine-protein kinase At4g03230 (852 aa).

An N-terminal signal peptide occupies residues 1–19 (MILSVFFYMFLLHIRRLDC). Residues 20 to 154 (FVAVQDSKTL…GNEANVVWQS (135 aa)) enclose the Bulb-type lectin domain. The Extracellular portion of the chain corresponds to 20-444 (FVAVQDSKTL…RGRGRYGEAK (425 aa)). 6 N-linked (GlcNAc...) asparagine glycosylation sites follow: asparagine 37, asparagine 59, asparagine 171, asparagine 187, asparagine 234, and asparagine 243. The region spanning 285-321 (PRDECSVYNACGNFGSCNSKNEEMCKCLPGFRPNFLE) is the EGF-like domain. 2 disulfides stabilise this stretch: cysteine 289-cysteine 301 and cysteine 295-cysteine 309. Residues 339 to 426 (CGKDGVVVGD…SRNVFIRVAV (88 aa)) form the PAN domain. Asparagine 352 carries an N-linked (GlcNAc...) asparagine glycan. Intrachain disulfides connect cysteine 373-cysteine 400 and cysteine 377-cysteine 383. Residues 445-465 (TPVVLIIVVTFTSAAILVVLS) form a helical membrane-spanning segment. Residues 466 to 852 (STASYVFLQR…ELTITLEDGR (387 aa)) lie on the Cytoplasmic side of the membrane. One can recognise a Protein kinase domain in the interval 532 to 819 (FSNANKLGQG…TLPTPKQPAF (288 aa)). Residues 538 to 546 (LGQGGFGPV) and lysine 560 contribute to the ATP site. Serine 566 is modified (phosphoserine). The caM-binding stretch occupies residues 621–638 (KLCQRLDWKMRCNIILGI). Aspartate 657 serves as the catalytic Proton acceptor. A phosphoserine mark is found at serine 661 and serine 674. Position 691 is a phosphothreonine (threonine 691). The interval 826 to 852 (SSSKASSSTKPETCSENELTITLEDGR) is disordered. Phosphoserine is present on residues serine 831 and serine 840. The segment covering 834-845 (TKPETCSENELT) has biased composition (polar residues). Threonine 847 carries the post-translational modification Phosphothreonine.

Belongs to the protein kinase superfamily. Ser/Thr protein kinase family.

It localises to the cell membrane. The enzyme catalyses L-seryl-[protein] + ATP = O-phospho-L-seryl-[protein] + ADP + H(+). It catalyses the reaction L-threonyl-[protein] + ATP = O-phospho-L-threonyl-[protein] + ADP + H(+). In Arabidopsis thaliana (Mouse-ear cress), this protein is G-type lectin S-receptor-like serine/threonine-protein kinase At4g03230.